Here is a 99-residue protein sequence, read N- to C-terminus: Plastocyanin (99 aa).

The Plastocyanin-like domain occupies 1 to 99 (IEVLLGGGDG…AGMVGKVTVN (99 aa)). Cu cation-binding residues include H37, C84, H87, and M92.

It belongs to the plastocyanin family. The cofactor is Cu(2+).

It localises to the plastid. The protein resides in the chloroplast thylakoid membrane. In terms of biological role, participates in electron transfer between P700 and the cytochrome b6-f complex in photosystem I. The protein is Plastocyanin (PETE) of Capsella bursa-pastoris (Shepherd's purse).